The following is a 173-amino-acid chain: 6,7-dimethyl-8-ribityllumazine synthase (173 aa).

5-amino-6-(D-ribitylamino)uracil contacts are provided by residues phenylalanine 24, 58 to 60 (ALE), and 82 to 84 (AVI). 87-88 (ET) lines the (2S)-2-hydroxy-3-oxobutyl phosphate pocket. Histidine 90 serves as the catalytic Proton donor. Position 115 (asparagine 115) interacts with 5-amino-6-(D-ribitylamino)uracil. A (2S)-2-hydroxy-3-oxobutyl phosphate-binding site is contributed by arginine 129. The tract at residues 150 to 173 (ALEPEEDDEDDEDEDFDDEEDDGR) is disordered. The segment covering 152–173 (EPEEDDEDDEDEDFDDEEDDGR) has biased composition (acidic residues).

The protein belongs to the DMRL synthase family.

The catalysed reaction is (2S)-2-hydroxy-3-oxobutyl phosphate + 5-amino-6-(D-ribitylamino)uracil = 6,7-dimethyl-8-(1-D-ribityl)lumazine + phosphate + 2 H2O + H(+). Its pathway is cofactor biosynthesis; riboflavin biosynthesis; riboflavin from 2-hydroxy-3-oxobutyl phosphate and 5-amino-6-(D-ribitylamino)uracil: step 1/2. Catalyzes the formation of 6,7-dimethyl-8-ribityllumazine by condensation of 5-amino-6-(D-ribitylamino)uracil with 3,4-dihydroxy-2-butanone 4-phosphate. This is the penultimate step in the biosynthesis of riboflavin. The polypeptide is 6,7-dimethyl-8-ribityllumazine synthase (Bordetella pertussis (strain Tohama I / ATCC BAA-589 / NCTC 13251)).